Reading from the N-terminus, the 274-residue chain is Bis(5'-nucleosyl)-tetraphosphatase, symmetrical (274 aa).

This sequence belongs to the Ap4A hydrolase family.

It catalyses the reaction P(1),P(4)-bis(5'-adenosyl) tetraphosphate + H2O = 2 ADP + 2 H(+). Hydrolyzes diadenosine 5',5'''-P1,P4-tetraphosphate to yield ADP. This chain is Bis(5'-nucleosyl)-tetraphosphatase, symmetrical, found in Shewanella baltica (strain OS155 / ATCC BAA-1091).